The chain runs to 1353 residues: MGTDSENPVLRNVLISFNLLLLGAVLKPFECRLEVTTEPAERPAVDEEGGLANCSPPVKEQPMVFHHIYNINVPVDSCCSSMLRSSAEEVSSEDDRLAEYTEQTSDSESQVTFTHRINLPKQACKCSTSLPSLQELLSRIEMLEREVSMLRDQCNSNCCQENAATGRLDYTLPCSGHGNFSLESCRCICSEGWAGSNCSEPRCPRGCSSRGVCLEGQCVCDNDYGGEDCSQLRCPAGCGSRGLCVDGECICEEGFGGEDCSQPRCPRDCSGRGHCDNGTCVCAEGYAGEDCGWLRCPNACSGRGVCQDGLCICEDGYGGQDCSAVAPPENLRVTGISDGSIELAWDSLGAATEYVVSYQPAGPGGSQLQQRVPGDWSTITITELEPGVAYNVSIYAVISDVLSSPVTTKVTTNLATPQGLKFKTITETTVEVQWEPFSFPFDGWEISFIPKNNEGGVIAQLPSTVTTFNQTGLKPGEEYTVTVVALKDQARSPPASDSISTLIDGPTQILVRDVSDTVAFVEWTPPRARVDAILLKYGLADGEGGRTTFRLQPPLSQYSLQALRPGARYHLAVSALRGANESQPALAQFTTEIDAPKNLRVGSRTPASLELTWDNSEAEAHSYRVVYSTLAGEHYHEVLVPRDTGPTTRATLADLVPGTEYGIGISAVMDSQQSVPATMNARTELDSPRDLLVTASTETSISLSWTKAMGPIDHYRVTFTPASGMASEVTVSRNESQLTLSELEPGTEYTISIIAERGRQQSLEATVDAFTGVRPITQLHFSQLTSSSVNITWSDPSPPADRLVLTYSPRDEEAPQQLALDGTRRHASLTGLRPSTEYLVSLVAVHGAVSSEPVTGSITTGMDAPKDLRVGNITQDSMVIYWSPPVAPFDHYRISYRAAEGRTDSTAIGNDATEYIMRLLQPATKYEIGVKSVRGREESEVASITTYTAMDAPLGVTATNITPTEALLQWNPPLMDVESYVLVLTRHTGETILVDGINQEYQLTNLQPSTTYTVAMYATNGPLTSQTISTNFTTLLDPPTNLTASEVTRRSALLSWVPPVGDIENYILTYRSTDGSRKELIVDAEDTWIRLEGLSETTQYTVRLQAAQNAMRSGFISTTFTTGGRVFANPQDCAQHLMNGDTLSGVYTISINGDLSQRVQVFCDMSTDGGGWIVFQRRQNGLTDFFRKWADYRVGFGNLEDEFWLGLDNIHKITSQGRYELRIDMRDGQEAAYAYYDKFSVGDSRSLYKLRIGDYNGTSGDSLTYHQGRPFSTKDRDNDVAVTNCAMSYKGAWWYKNCHRTNLNGKYGESRHSQGINWYHWKGHEFSIPFVEMKMRPYNHRNISGRKRRSLQL.

The N-terminal stretch at 1–33 (MGTDSENPVLRNVLISFNLLLLGAVLKPFECRL) is a signal peptide. Residues 132–156 (SLQELLSRIEMLEREVSMLRDQCNS) are a coiled coil. N-linked (GlcNAc...) asparagine glycans are attached at residues Asn179 and Asn197. EGF-like domains are found at residues 187 to 198 (CICSEGWAGSNC), 234 to 260 (CPAG…GEDC), 265 to 291 (CPRD…GEDC), and 292 to 323 (GWLR…QDCS). Asn277 carries an N-linked (GlcNAc...) asparagine glycan. Intrachain disulfides connect Cys296/Cys306 and Cys313/Cys322. Fibronectin type-III domains are found at residues 327–419 (PPEN…TPQG), 420–504 (LKFK…TLID), 505–594 (GPTQ…TEID), 595–686 (APKN…TELD), 687–776 (SPRD…VRPI), 777–863 (TQLH…TGMD), 864–952 (APKD…AMDA), 953–1037 (PLGV…TLLD), and 1038–1126 (PPTN…GGRV). Asn391, Asn469, and Asn580 each carry an N-linked (GlcNAc...) asparagine glycan. N-linked (GlcNAc...) asparagine glycosylation is found at Asn734, Asn790, Asn872, Asn1031, Asn1041, Asn1256, and Asn1342. One can recognise a Fibrinogen C-terminal domain in the interval 1124 to 1339 (GRVFANPQDC…FVEMKMRPYN (216 aa)).

It belongs to the tenascin family. Forms homodimers and homotrimers. Interacts with CNTN1, NFASC and CSPG5. In terms of tissue distribution, brain specific.

Its subcellular location is the secreted. It localises to the extracellular space. It is found in the extracellular matrix. Its function is as follows. Neural extracellular matrix (ECM) protein involved in interactions with different cells and matrix components. Involved in cell attachment and neurite formation. Interaction with CNTN1 enhances the neurite outgrowth. This chain is Tenascin-R (TNR), found in Gallus gallus (Chicken).